The following is a 335-amino-acid chain: Mycobacterial beta-ketoacyl-[acyl-carrier-protein] synthase III (335 aa).

Active-site residues include cysteine 122 and histidine 258. Residues 259–263 form an ACP-binding region; sequence QANSR. The active site involves asparagine 289.

The protein belongs to the thiolase-like superfamily. FabH family. Homodimer.

It is found in the cytoplasm. The enzyme catalyses malonyl-[ACP] + dodecanoyl-CoA + H(+) = 3-oxotetradecanoyl-[ACP] + CO2 + CoA. The protein operates within lipid metabolism; fatty acid biosynthesis. It participates in lipid metabolism; mycolic acid biosynthesis. Its function is as follows. Catalyzes the condensation reaction of fatty acid synthesis by the addition to an acyl acceptor of two carbons from malonyl-ACP. Catalyzes the first condensation reaction which initiates fatty acid synthesis and may therefore play a role in governing the total rate of fatty acid production. Possesses both acetoacetyl-ACP synthase and acetyl transacylase activities. Its substrate specificity determines the biosynthesis of branched-chain and/or straight-chain of fatty acids. The sequence is that of Mycobacterial beta-ketoacyl-[acyl-carrier-protein] synthase III from Mycobacterium bovis (strain ATCC BAA-935 / AF2122/97).